Here is a 217-residue protein sequence, read N- to C-terminus: GTPase IMAP family member GIMD1 (217 aa).

The region spanning 6–217 is the AIG1-type G domain; that stretch reads KMIINLAVFG…ENHFQVLSLA (212 aa). Residues 15 to 23, S36, and 148 to 150 contribute to the GTP site; these read GRTQSGKSS and HAE.

Belongs to the TRAFAC class TrmE-Era-EngA-EngB-Septin-like GTPase superfamily. AIG1/Toc34/Toc159-like paraseptin GTPase family. IAN subfamily.

The sequence is that of GTPase IMAP family member GIMD1 (Gimd1) from Mus musculus (Mouse).